A 203-amino-acid polypeptide reads, in one-letter code: FMN-dependent NADH:quinone oxidoreductase (203 aa).

FMN is bound at residue 143-146 (SNGG).

This sequence belongs to the azoreductase type 1 family. Homodimer. The cofactor is FMN.

It carries out the reaction 2 a quinone + NADH + H(+) = 2 a 1,4-benzosemiquinone + NAD(+). The catalysed reaction is N,N-dimethyl-1,4-phenylenediamine + anthranilate + 2 NAD(+) = 2-(4-dimethylaminophenyl)diazenylbenzoate + 2 NADH + 2 H(+). Functionally, quinone reductase that provides resistance to thiol-specific stress caused by electrophilic quinones. In terms of biological role, also exhibits azoreductase activity. Catalyzes the reductive cleavage of the azo bond in aromatic azo compounds to the corresponding amines. The sequence is that of FMN-dependent NADH:quinone oxidoreductase from Streptococcus suis (strain 98HAH33).